The chain runs to 310 residues: Lipoyl synthase (310 aa).

[4Fe-4S] cluster-binding residues include Cys45, Cys50, Cys56, Cys71, Cys75, Cys78, and Ser285. The region spanning 57–274 is the Radical SAM core domain; it reads WTKKHATVMI…GSIARAKGFL (218 aa).

The protein belongs to the radical SAM superfamily. Lipoyl synthase family. [4Fe-4S] cluster is required as a cofactor.

The protein localises to the cytoplasm. The enzyme catalyses [[Fe-S] cluster scaffold protein carrying a second [4Fe-4S](2+) cluster] + N(6)-octanoyl-L-lysyl-[protein] + 2 oxidized [2Fe-2S]-[ferredoxin] + 2 S-adenosyl-L-methionine + 4 H(+) = [[Fe-S] cluster scaffold protein] + N(6)-[(R)-dihydrolipoyl]-L-lysyl-[protein] + 4 Fe(3+) + 2 hydrogen sulfide + 2 5'-deoxyadenosine + 2 L-methionine + 2 reduced [2Fe-2S]-[ferredoxin]. It participates in protein modification; protein lipoylation via endogenous pathway; protein N(6)-(lipoyl)lysine from octanoyl-[acyl-carrier-protein]: step 2/2. Its function is as follows. Catalyzes the radical-mediated insertion of two sulfur atoms into the C-6 and C-8 positions of the octanoyl moiety bound to the lipoyl domains of lipoate-dependent enzymes, thereby converting the octanoylated domains into lipoylated derivatives. This is Lipoyl synthase from Novosphingobium aromaticivorans (strain ATCC 700278 / DSM 12444 / CCUG 56034 / CIP 105152 / NBRC 16084 / F199).